Reading from the N-terminus, the 62-residue chain is Photosystem II reaction center protein Z (62 aa).

Transmembrane regions (helical) follow at residues 8-28 (AVFA…VVFA) and 41-61 (FSGT…NSLI).

It belongs to the PsbZ family. In terms of assembly, PSII is composed of 1 copy each of membrane proteins PsbA, PsbB, PsbC, PsbD, PsbE, PsbF, PsbH, PsbI, PsbJ, PsbK, PsbL, PsbM, PsbT, PsbY, PsbZ, Psb30/Ycf12, at least 3 peripheral proteins of the oxygen-evolving complex and a large number of cofactors. It forms dimeric complexes.

It is found in the plastid. Its subcellular location is the chloroplast thylakoid membrane. Functionally, may control the interaction of photosystem II (PSII) cores with the light-harvesting antenna, regulates electron flow through the 2 photosystem reaction centers. PSII is a light-driven water plastoquinone oxidoreductase, using light energy to abstract electrons from H(2)O, generating a proton gradient subsequently used for ATP formation. This is Photosystem II reaction center protein Z from Oenothera elata subsp. hookeri (Hooker's evening primrose).